A 75-amino-acid polypeptide reads, in one-letter code: Sec-independent protein translocase protein TatA (75 aa).

The chain crosses the membrane as a helical span at residues 1 to 21 (MGGFSIWHWLIVLVIVLLVFG). Residues 41 to 75 (KGMHDDDKPAGKLGDDSRTAEQAREAQAERDRDAR) form a disordered region.

Belongs to the TatA/E family. The Tat system comprises two distinct complexes: a TatABC complex, containing multiple copies of TatA, TatB and TatC subunits, and a separate TatA complex, containing only TatA subunits. Substrates initially bind to the TatABC complex, which probably triggers association of the separate TatA complex to form the active translocon.

It is found in the cell inner membrane. In terms of biological role, part of the twin-arginine translocation (Tat) system that transports large folded proteins containing a characteristic twin-arginine motif in their signal peptide across membranes. TatA could form the protein-conducting channel of the Tat system. The protein is Sec-independent protein translocase protein TatA of Xanthomonas axonopodis pv. citri (strain 306).